Reading from the N-terminus, the 286-residue chain is Pyridoxal kinase PdxY (286 aa).

Substrate contacts are provided by residues serine 9 and 44–45 (TQ). ATP is bound by residues aspartate 111, glutamate 148, and lysine 181. Aspartate 222 is a binding site for substrate.

This sequence belongs to the pyridoxine kinase family. PdxY subfamily. As to quaternary structure, homodimer. Mg(2+) serves as cofactor.

It catalyses the reaction pyridoxal + ATP = pyridoxal 5'-phosphate + ADP + H(+). It participates in cofactor metabolism; pyridoxal 5'-phosphate salvage; pyridoxal 5'-phosphate from pyridoxal: step 1/1. Pyridoxal kinase involved in the salvage pathway of pyridoxal 5'-phosphate (PLP). Catalyzes the phosphorylation of pyridoxal to PLP. The chain is Pyridoxal kinase PdxY from Histophilus somni (strain 129Pt) (Haemophilus somnus).